A 273-amino-acid chain; its full sequence is Putative pyruvate, phosphate dikinase regulatory protein (273 aa).

Residue 153–160 coordinates ADP; the sequence is GVSRTSKT.

This sequence belongs to the pyruvate, phosphate/water dikinase regulatory protein family. PDRP subfamily.

The enzyme catalyses N(tele)-phospho-L-histidyl/L-threonyl-[pyruvate, phosphate dikinase] + ADP = N(tele)-phospho-L-histidyl/O-phospho-L-threonyl-[pyruvate, phosphate dikinase] + AMP + H(+). The catalysed reaction is N(tele)-phospho-L-histidyl/O-phospho-L-threonyl-[pyruvate, phosphate dikinase] + phosphate + H(+) = N(tele)-phospho-L-histidyl/L-threonyl-[pyruvate, phosphate dikinase] + diphosphate. Bifunctional serine/threonine kinase and phosphorylase involved in the regulation of the pyruvate, phosphate dikinase (PPDK) by catalyzing its phosphorylation/dephosphorylation. This Rhizobium meliloti (strain 1021) (Ensifer meliloti) protein is Putative pyruvate, phosphate dikinase regulatory protein.